A 360-amino-acid polypeptide reads, in one-letter code: Phospho-N-acetylmuramoyl-pentapeptide-transferase (360 aa).

The next 10 membrane-spanning stretches (helical) occupy residues 2-22 (IAIL…TPLF), 52-72 (MGGV…NISA), 80-100 (GLLL…DDFI), 114-134 (WKII…LQFP), 156-176 (LAFA…NFLI), 189-209 (LDGL…VVTM), 235-255 (LAIV…WNAS), 259-279 (IFMG…LSIL), 284-304 (FLAV…VIQI), and 338-358 (FWLI…AEWV).

It belongs to the glycosyltransferase 4 family. MraY subfamily. Mg(2+) is required as a cofactor.

It is found in the cell membrane. The catalysed reaction is UDP-N-acetyl-alpha-D-muramoyl-L-alanyl-gamma-D-glutamyl-meso-2,6-diaminopimeloyl-D-alanyl-D-alanine + di-trans,octa-cis-undecaprenyl phosphate = di-trans,octa-cis-undecaprenyl diphospho-N-acetyl-alpha-D-muramoyl-L-alanyl-D-glutamyl-meso-2,6-diaminopimeloyl-D-alanyl-D-alanine + UMP. It participates in cell wall biogenesis; peptidoglycan biosynthesis. Its function is as follows. Catalyzes the initial step of the lipid cycle reactions in the biosynthesis of the cell wall peptidoglycan: transfers peptidoglycan precursor phospho-MurNAc-pentapeptide from UDP-MurNAc-pentapeptide onto the lipid carrier undecaprenyl phosphate, yielding undecaprenyl-pyrophosphoryl-MurNAc-pentapeptide, known as lipid I. The sequence is that of Phospho-N-acetylmuramoyl-pentapeptide-transferase from Beutenbergia cavernae (strain ATCC BAA-8 / DSM 12333 / CCUG 43141 / JCM 11478 / NBRC 16432 / NCIMB 13614 / HKI 0122).